A 336-amino-acid chain; its full sequence is GTP 3',8-cyclase (336 aa).

Positions 16–241 (AYRRTYYYLR…QSKGITDGPA (226 aa)) constitute a Radical SAM core domain. Position 25 (R25) interacts with GTP. [4Fe-4S] cluster is bound by residues C32 and C36. Y38 serves as a coordination point for S-adenosyl-L-methionine. A [4Fe-4S] cluster-binding site is contributed by C39. R75 contacts GTP. Residue G79 coordinates S-adenosyl-L-methionine. A GTP-binding site is contributed by T106. An S-adenosyl-L-methionine-binding site is contributed by S130. K167 contacts GTP. M201 is a binding site for S-adenosyl-L-methionine. [4Fe-4S] cluster-binding residues include C264 and C267. Residue 269–271 (RLR) coordinates GTP. C281 lines the [4Fe-4S] cluster pocket.

This sequence belongs to the radical SAM superfamily. MoaA family. Monomer and homodimer. [4Fe-4S] cluster serves as cofactor.

The enzyme catalyses GTP + AH2 + S-adenosyl-L-methionine = (8S)-3',8-cyclo-7,8-dihydroguanosine 5'-triphosphate + 5'-deoxyadenosine + L-methionine + A + H(+). The protein operates within cofactor biosynthesis; molybdopterin biosynthesis. Functionally, catalyzes the cyclization of GTP to (8S)-3',8-cyclo-7,8-dihydroguanosine 5'-triphosphate. The polypeptide is GTP 3',8-cyclase (Actinobacillus succinogenes (strain ATCC 55618 / DSM 22257 / CCUG 43843 / 130Z)).